Consider the following 428-residue polypeptide: UDP-N-acetylglucosamine 1-carboxyvinyltransferase 2 (428 aa).

22–23 (KN) is a phosphoenolpyruvate binding site. UDP-N-acetyl-alpha-D-glucosamine is bound at residue arginine 92. Cysteine 116 (proton donor) is an active-site residue. Cysteine 116 carries the 2-(S-cysteinyl)pyruvic acid O-phosphothioketal modification. UDP-N-acetyl-alpha-D-glucosamine contacts are provided by residues 121–125 (RPIDQ), aspartate 304, and isoleucine 326.

The protein belongs to the EPSP synthase family. MurA subfamily.

It localises to the cytoplasm. The catalysed reaction is phosphoenolpyruvate + UDP-N-acetyl-alpha-D-glucosamine = UDP-N-acetyl-3-O-(1-carboxyvinyl)-alpha-D-glucosamine + phosphate. The protein operates within cell wall biogenesis; peptidoglycan biosynthesis. Functionally, cell wall formation. Adds enolpyruvyl to UDP-N-acetylglucosamine. This is UDP-N-acetylglucosamine 1-carboxyvinyltransferase 2 from Oceanobacillus iheyensis (strain DSM 14371 / CIP 107618 / JCM 11309 / KCTC 3954 / HTE831).